The chain runs to 609 residues: Tyrosine-protein kinase transforming protein Fes (609 aa).

2 disordered regions span residues 1–20 and 152–208; these read AARA…PQGH and RDSA…GGRT. The 167-residue stretch at 8-174 folds into the F-BAR; degenerate domain; that stretch reads MGFSSELCSP…SKDKDRDKAK (167 aa). Composition is skewed to basic and acidic residues over residues 160–175 and 190–206; these read KYQE…KAKL and QDDR…REGG. Residues 247-336 enclose the SH2 domain; sequence WYHGALPRAE…KSGIVLNRAV (90 aa). The Protein kinase domain maps to 348–609; that stretch reads LVLGEQIGRG…ELQSIRKRHR (262 aa). Residues 354-362 and K377 contribute to the ATP site; that span reads IGRGNFGEV. The active-site Proton acceptor is D470. At Y500 the chain carries Phosphotyrosine; by autocatalysis.

Belongs to the protein kinase superfamily. Tyr protein kinase family. Fes/fps subfamily.

The enzyme catalyses L-tyrosyl-[protein] + ATP = O-phospho-L-tyrosyl-[protein] + ADP + H(+). This Felidae (cat family) protein is Tyrosine-protein kinase transforming protein Fes (V-FES).